Reading from the N-terminus, the 178-residue chain is MDKKSNQVERPVVFFDISIGDVPVGRMKMELFSDIVPRTAENFRQLCTGEYKRNGVPQGYKNCLFHRVIKDFMVQGGDFIKGDGTGAMCIYGGDRFADENFIEKHTGAGLLSMANSGPNSNGCQFFITCDACDFLDGKHVVFGRLVDGLLTLRKIENVATGPNNRPKLPVKITECGQM.

The 164-residue stretch at 14–177 (FFDISIGDVP…LPVKITECGQ (164 aa)) folds into the PPIase cyclophilin-type domain.

Belongs to the cyclophilin-type PPIase family. PPIase H subfamily.

The protein localises to the nucleus. The enzyme catalyses [protein]-peptidylproline (omega=180) = [protein]-peptidylproline (omega=0). Its function is as follows. PPIases accelerate the folding of proteins. It catalyzes the cis-trans isomerization of proline imidic peptide bonds in oligopeptides. In Rhizopus delemar (strain RA 99-880 / ATCC MYA-4621 / FGSC 9543 / NRRL 43880) (Mucormycosis agent), this protein is Peptidyl-prolyl cis-trans isomerase H (cyp7).